The chain runs to 151 residues: Linear element protein Mug20 (151 aa).

A coiled-coil region spans residues 56-140 (EEKLRALDKL…CAMEKLKMIE (85 aa)).

In terms of assembly, component of linear elements (LinEs), which are similar to synaptonemal complexes, at least composed of rec27, rec25, rec10 and mug20. Interacts with rec10.

The protein localises to the cytoplasm. The protein resides in the nucleus. Its subcellular location is the chromosome. During meiotic DNA recombination, binds to and may help activate DNA double-strand break (DSB) hotspot sites. The polypeptide is Linear element protein Mug20 (Schizosaccharomyces pombe (strain 972 / ATCC 24843) (Fission yeast)).